A 133-amino-acid polypeptide reads, in one-letter code: MSDWLDAVKWDAQGLVPAIAQDAASGEILMVAWMNREALEETARTGRGVYFSRSRHKLWRKGEESGHVQTVSEIRLDCDNDVILLKIEQLGGIACHTGRRSCFFHKLTTDDRGHADWVATEPVLKNPDEIYRR.

Position 77 (aspartate 77) interacts with Mg(2+). Position 78 (cysteine 78) interacts with Zn(2+). Mg(2+) contacts are provided by aspartate 79 and aspartate 81. The Zn(2+) site is built by cysteine 95 and cysteine 102.

Belongs to the PRA-CH family. As to quaternary structure, homodimer. Requires Mg(2+) as cofactor. It depends on Zn(2+) as a cofactor.

It localises to the cytoplasm. It carries out the reaction 1-(5-phospho-beta-D-ribosyl)-5'-AMP + H2O = 1-(5-phospho-beta-D-ribosyl)-5-[(5-phospho-beta-D-ribosylamino)methylideneamino]imidazole-4-carboxamide. It participates in amino-acid biosynthesis; L-histidine biosynthesis; L-histidine from 5-phospho-alpha-D-ribose 1-diphosphate: step 3/9. Functionally, catalyzes the hydrolysis of the adenine ring of phosphoribosyl-AMP. The polypeptide is Phosphoribosyl-AMP cyclohydrolase (Thiobacillus denitrificans (strain ATCC 25259 / T1)).